An 861-amino-acid polypeptide reads, in one-letter code: Envelope glycoprotein gp160 (861 aa).

The N-terminal stretch at 1-32 (MRVKEKYQHLWRWGWKWGTMLLGILMICSATE) is a signal peptide. Residues 33–689 (KLWVTVYYGV…ITNWLWYIKI (657 aa)) lie on the Extracellular side of the membrane. The cysteines at positions 54 and 74 are disulfide-linked. N-linked (GlcNAc...) asparagine; by host glycosylation is found at N88, N136, N141, N146, N161, and N165. 5 cysteine pairs are disulfide-bonded: C119/C210, C126/C201, C131/C162, C223/C252, and C233/C244. The V1 stretch occupies residues 131-161 (CTDLGNATNTNSSNTNSSSGEMMMEKGEIKN). Residues 162–201 (CSFNISTSIRGKVQKEYAFFYKLDIIPIDNDTTSYTLTSC) are V2. The Putative binding site to alpha-4/beta-7 integrin motif lies at 184-186 (LDI). N191, N202, N235, N239, N246, N267, N281, N294, N300, N306, N337, N344, and N361 each carry an N-linked (GlcNAc...) asparagine; by host glycan. Positions 301 to 335 (CTRPNNNTRKSIRIQRGPGRAFVTIGKIGNMRQAH) are V3. A disulfide bond links C301 and C336. Positions 369 to 379 (SSGGDPEIVTH) are CD4-binding loop. Disulfide bonds link C383/C450 and C390/C423. Residues 390–423 (CNSTQLFNSTWFNSTWSTEGSNNTEGSDTITLPC) are V4. N-linked (GlcNAc...) asparagine; by host glycosylation is found at N391, N397, N402, N411, N453, and N468. V5 stretches follow at residues 466-476 (NNNGSEIFRPG) and 468-476 (NGSEIFRPG). The segment at 517 to 537 (AVGIGALFLGFLGAAGSTMGA) is fusion peptide. An immunosuppression region spans residues 579 to 597 (KQLQARILAVERYLKDQQL). The cysteines at positions 603 and 609 are disulfide-linked. N616, N621, N630, N642, and N679 each carry an N-linked (GlcNAc...) asparagine; by host glycan. Residues 638-672 (REINNYTSLIHSLIEESQNQQEKNEQELLELDKWA) are a coiled coil. An MPER; binding to GalCer region spans residues 667 to 688 (ELDKWASLWNWFNITNWLWYIK). The helical transmembrane segment at 690 to 710 (FIMIVGGLVGLRIVFAVLSIV) threads the bilayer. At 711 to 861 (NRVRQGYSPL…IRQGLERILL (151 aa)) the chain is on the cytoplasmic side. Positions 717–720 (YSPL) match the YXXL motif; contains endocytosis signal motif. Residues 723 to 747 (QTHLPTPRGPDRPEGIEEEGGERDR) form a disordered region. 2 S-palmitoyl cysteine; by host lipidation sites follow: C769 and C842. The Di-leucine internalization motif signature appears at 860 to 861 (LL).

This sequence belongs to the HIV-1 env protein family. The mature envelope protein (Env) consists of a homotrimer of non-covalently associated gp120-gp41 heterodimers. The resulting complex protrudes from the virus surface as a spike. There seems to be as few as 10 spikes on the average virion. Interacts with host CD4, CCR5 and CXCR4. Gp120 also interacts with the C-type lectins CD209/DC-SIGN and CLEC4M/DC-SIGNR (collectively referred to as DC-SIGN(R)). Gp120 and gp41 interact with GalCer. Gp120 interacts with host ITGA4/ITGB7 complex; on CD4+ T-cells, this interaction results in rapid activation of integrin ITGAL/LFA-1, which facilitates efficient cell-to-cell spreading of HIV-1. Gp120 interacts with cell-associated heparan sulfate; this interaction increases virus infectivity on permissive cells and may be involved in infection of CD4- cells. As to quaternary structure, the mature envelope protein (Env) consists of a homotrimer of non-covalently associated gp120-gp41 heterodimers. The resulting complex protrudes from the virus surface as a spike. There seems to be as few as 10 spikes on the average virion. Post-translationally, highly glycosylated by host. The high number of glycan on the protein is reffered to as 'glycan shield' because it contributes to hide protein sequence from adaptive immune system. Palmitoylation of the transmembrane protein and of Env polyprotein (prior to its proteolytic cleavage) is essential for their association with host cell membrane lipid rafts. Palmitoylation is therefore required for envelope trafficking to classical lipid rafts, but not for viral replication. In terms of processing, specific enzymatic cleavages in vivo yield mature proteins. Envelope glycoproteins are synthesized as an inactive precursor that is heavily N-glycosylated and processed likely by host cell furin in the Golgi to yield the mature SU and TM proteins. The cleavage site between SU and TM requires the minimal sequence [KR]-X-[KR]-R. About 2 of the 9 disulfide bonds of gp41 are reduced by P4HB/PDI, following binding to CD4 receptor.

It localises to the virion membrane. Its subcellular location is the host cell membrane. It is found in the host endosome membrane. Oligomerizes in the host endoplasmic reticulum into predominantly trimers. In a second time, gp160 transits in the host Golgi, where glycosylation is completed. The precursor is then proteolytically cleaved in the trans-Golgi and thereby activated by cellular furin or furin-like proteases to produce gp120 and gp41. Its function is as follows. Attaches the virus to the host lymphoid cell by binding to the primary receptor CD4. This interaction induces a structural rearrangement creating a high affinity binding site for a chemokine coreceptor like CXCR4 and/or CCR5. Acts as a ligand for CD209/DC-SIGN and CLEC4M/DC-SIGNR, which are respectively found on dendritic cells (DCs), and on endothelial cells of liver sinusoids and lymph node sinuses. These interactions allow capture of viral particles at mucosal surfaces by these cells and subsequent transmission to permissive cells. HIV subverts the migration properties of dendritic cells to gain access to CD4+ T-cells in lymph nodes. Virus transmission to permissive T-cells occurs either in trans (without DCs infection, through viral capture and transmission), or in cis (following DCs productive infection, through the usual CD4-gp120 interaction), thereby inducing a robust infection. In trans infection, bound virions remain infectious over days and it is proposed that they are not degraded, but protected in non-lysosomal acidic organelles within the DCs close to the cell membrane thus contributing to the viral infectious potential during DCs' migration from the periphery to the lymphoid tissues. On arrival at lymphoid tissues, intact virions recycle back to DCs' cell surface allowing virus transmission to CD4+ T-cells. In terms of biological role, acts as a class I viral fusion protein. Under the current model, the protein has at least 3 conformational states: pre-fusion native state, pre-hairpin intermediate state, and post-fusion hairpin state. During fusion of viral and target intracellular membranes, the coiled coil regions (heptad repeats) assume a trimer-of-hairpins structure, positioning the fusion peptide in close proximity to the C-terminal region of the ectodomain. The formation of this structure appears to drive apposition and subsequent fusion of viral and target cell membranes. Complete fusion occurs in host cell endosomes and is dynamin-dependent, however some lipid transfer might occur at the plasma membrane. The virus undergoes clathrin-dependent internalization long before endosomal fusion, thus minimizing the surface exposure of conserved viral epitopes during fusion and reducing the efficacy of inhibitors targeting these epitopes. Membranes fusion leads to delivery of the nucleocapsid into the cytoplasm. This is Envelope glycoprotein gp160 from Homo sapiens (Human).